Here is a 484-residue protein sequence, read N- to C-terminus: Sodium-dependent glucose transporter 1 (484 aa).

A Phosphoserine modification is found at S6. 12 helical membrane-spanning segments follow: residues 40 to 60 (WFTTVVLNAAFLGMGVSAAVL), 80 to 100 (EIFVGRALGYLGGSVVGGVLF), 106 to 126 (FLLLGLSHLLTAAGLYLTPFC), 135 to 155 (MMSITGVSFGVLDTGGNVLIL), 168 to 188 (ALHFSFALGAFLAPLLAKLAW), 227 to 247 (LLWAYASIGTYVLVLSVFLFA), 274 to 294 (ALLCLLFLFFFFYVGAEVTYG), 317 to 337 (SIFWGTFAACRGLAIFFATLL), 340 to 360 (GTMMVLCNIGSLASSFFLVLF), 366 to 386 (CLWIASSVYGASMAATFPSGI), 401 to 421 (AFILVGAALGLMATPALSGIL), and 428 to 448 (LPVILYMCLGSAVLTTVLFPV).

The protein belongs to the major facilitator superfamily. As to expression, expressed in brain, liver, lung, and kidney. In kidney expressed in cortex and inner medulla, in ascending thin limbs (ATLs) and lower descending thin limbs (DTLs). Primarily expressed in the proximal tubules of the kidney.

Its subcellular location is the apical cell membrane. Its function is as follows. May function as a sodium-dependent glucose transporter. Potential channels for urea in the inner medulla of kidney. This Rattus norvegicus (Rat) protein is Sodium-dependent glucose transporter 1.